The primary structure comprises 459 residues: Cysteine--tRNA ligase (459 aa).

A Zn(2+)-binding site is contributed by Cys28. The 'HIGH' region motif lies at 30–40 (VTIYDLCHIGH). The Zn(2+) site is built by Cys209, His234, and Glu238. A 'KMSKS' region motif is present at residues 266–270 (KMSKS). Residue Lys269 participates in ATP binding.

It belongs to the class-I aminoacyl-tRNA synthetase family. Monomer. Zn(2+) serves as cofactor.

It is found in the cytoplasm. The enzyme catalyses tRNA(Cys) + L-cysteine + ATP = L-cysteinyl-tRNA(Cys) + AMP + diphosphate. This chain is Cysteine--tRNA ligase, found in Shewanella baltica (strain OS185).